The chain runs to 650 residues: A-kinase anchor protein 10, mitochondrial (650 aa).

A mitochondrion-targeting transit peptide spans 1 to 16 (RALRPDPGPAMSFFRR). 2 disordered regions span residues 1–45 (RALR…QKST) and 168–192 (SSLAEPVSPTQKHETAAAPVTESLD). Position 40 is a phosphoserine (serine 40). RGS domains are found at residues 113 to 356 (TLEQ…CKYQ) and 366 to 493 (YLAD…YKYL). Phosphoserine is present on serine 268. The tract at residues 512-535 (LAAQGSGGPPDDPLPGASDPSASQ) is disordered. The span at 525-535 (LPGASDPSASQ) shows a compositional bias: low complexity. The interval 622–635 (LAWKIAKMIVSDVM) is PKA-RII subunit binding.

The protein resides in the mitochondrion. It localises to the membrane. The protein localises to the cytoplasm. Differentially targeted protein that binds to type I and II regulatory subunits of protein kinase A and anchors them to the mitochondria or the plasma membrane. Although the physiological relevance between PKA and AKAPS with mitochondria is not fully understood, one idea is that BAD, a proapoptotic member, is phosphorylated and inactivated by mitochondria-anchored PKA. It cannot be excluded too that it may facilitate PKA as well as G protein signal transduction, by acting as an adapter for assembling multiprotein complexes. With its RGS domain, it could lead to the interaction to G-alpha proteins, providing a link between the signaling machinery and the downstream kinase. The chain is A-kinase anchor protein 10, mitochondrial (AKAP10) from Sus scrofa (Pig).